Reading from the N-terminus, the 246-residue chain is NAD-dependent protein deacylase (246 aa).

Residues 1–246 enclose the Deacetylase sirtuin-type domain; it reads MDLSQARAAL…RGLELLLEDD (246 aa). Position 21–41 (21–41) interacts with NAD(+); that stretch reads GAGISAESGIPTFRDAQTGHW. Substrate-binding residues include Tyr66 and Arg69. An NAD(+)-binding site is contributed by 101 to 104; sequence QNVD. His123 serves as the catalytic Proton acceptor. NAD(+)-binding positions include 191 to 193, 217 to 219, and Ala235; these read GTS and NPE.

Belongs to the sirtuin family. Class III subfamily.

The protein resides in the cytoplasm. The enzyme catalyses N(6)-acetyl-L-lysyl-[protein] + NAD(+) + H2O = 2''-O-acetyl-ADP-D-ribose + nicotinamide + L-lysyl-[protein]. The catalysed reaction is N(6)-succinyl-L-lysyl-[protein] + NAD(+) + H2O = 2''-O-succinyl-ADP-D-ribose + nicotinamide + L-lysyl-[protein]. In terms of biological role, NAD-dependent lysine deacetylase and desuccinylase that specifically removes acetyl and succinyl groups on target proteins. Modulates the activities of several proteins which are inactive in their acylated form. This chain is NAD-dependent protein deacylase, found in Deinococcus radiodurans (strain ATCC 13939 / DSM 20539 / JCM 16871 / CCUG 27074 / LMG 4051 / NBRC 15346 / NCIMB 9279 / VKM B-1422 / R1).